The following is a 687-amino-acid chain: Glycine--tRNA ligase beta subunit (687 aa).

This sequence belongs to the class-II aminoacyl-tRNA synthetase family. Tetramer of two alpha and two beta subunits.

The protein localises to the cytoplasm. The catalysed reaction is tRNA(Gly) + glycine + ATP = glycyl-tRNA(Gly) + AMP + diphosphate. This is Glycine--tRNA ligase beta subunit from Lactobacillus acidophilus (strain ATCC 700396 / NCK56 / N2 / NCFM).